The primary structure comprises 435 residues: Putative acid phosphatase F26C11.1 (435 aa).

The active-site Nucleophile is H38. D317 functions as the Proton donor in the catalytic mechanism. A disulfide bond links C382 and C388.

The protein belongs to the histidine acid phosphatase family.

It catalyses the reaction a phosphate monoester + H2O = an alcohol + phosphate. The sequence is that of Putative acid phosphatase F26C11.1 from Caenorhabditis elegans.